Here is a 399-residue protein sequence, read N- to C-terminus: Elongation factor Tu (399 aa).

Residues 10 to 209 form the tr-type G domain; sequence KPHVNIGTIG…AVDSYIPTPV (200 aa). Residues 19–26 form a G1 region; sequence GHVDHGKT. 19–26 is a GTP binding site; that stretch reads GHVDHGKT. Residue Thr26 coordinates Mg(2+). Residues 60 to 64 form a G2 region; it reads GITIA. The G3 stretch occupies residues 81–84; it reads DCPG. Residues 81–85 and 136–139 contribute to the GTP site; these read DCPGH and NKAD. The G4 stretch occupies residues 136–139; the sequence is NKAD. The tract at residues 174 to 176 is G5; that stretch reads SAL.

Belongs to the TRAFAC class translation factor GTPase superfamily. Classic translation factor GTPase family. EF-Tu/EF-1A subfamily. As to quaternary structure, monomer.

The protein resides in the cytoplasm. The catalysed reaction is GTP + H2O = GDP + phosphate + H(+). GTP hydrolase that promotes the GTP-dependent binding of aminoacyl-tRNA to the A-site of ribosomes during protein biosynthesis. This is Elongation factor Tu from Campylobacter fetus subsp. fetus (strain 82-40).